Here is a 425-residue protein sequence, read N- to C-terminus: Oxytetracycline polyketide putative beta-ketoacyl synthase 1 (425 aa).

Residues 7–420 (ARRVVITGIG…GFQSAIVLTE (414 aa)) enclose the Ketosynthase family 3 (KS3) domain. Catalysis depends on for beta-ketoacyl synthase activity residues Cys173, His313, and His350.

Belongs to the thiolase-like superfamily. Beta-ketoacyl-ACP synthases family.

It participates in antibiotic biosynthesis; oxytetracycline biosynthesis. In Streptomyces rimosus, this protein is Oxytetracycline polyketide putative beta-ketoacyl synthase 1.